The chain runs to 186 residues: Ribosome-recycling factor (186 aa).

The protein belongs to the RRF family.

Its subcellular location is the cytoplasm. Its function is as follows. Responsible for the release of ribosomes from messenger RNA at the termination of protein biosynthesis. May increase the efficiency of translation by recycling ribosomes from one round of translation to another. The sequence is that of Ribosome-recycling factor from Chlorobaculum tepidum (strain ATCC 49652 / DSM 12025 / NBRC 103806 / TLS) (Chlorobium tepidum).